An 82-amino-acid chain; its full sequence is MNLMDENTPKNVGIYVRVSTEEQAKEGYSISAQKEKLKAYCISQGWDSYKFYIDEGKSAKDIHRPSLELMLRHIEQGIMTHC.

The 72-residue stretch at 11–82 (NVGIYVRVST…HIEQGIMTHC (72 aa)) folds into the Resolvase/invertase-type recombinase catalytic domain. Catalysis depends on Ser-19, which acts as the O-(5'-phospho-DNA)-serine intermediate.

It belongs to the site-specific recombinase resolvase family.

This is an uncharacterized protein from Bacillus phage phi105 (Bacteriophage phi-105).